The sequence spans 216 residues: MASPLLPTSTTPDQLPGGDPQLLSSLRVLLSRVLATVRHASADARPWAELVDRSAFSRPPSLSEATSRVRKNFSYFRANYITLVAILLAASLLTHPFALFLLASLAASWLFLYFFRPADQPLVIGGRTFSDLETLGILCLSTVVVMFMTSVGSLLMSTLAVGIMGVAIHGAFRAPEDLFLEEQEAIGSGLFAFFNNNASNAAAAAIATSAMSRVRV.

The residue at position 2 (Ala2) is an N-acetylalanine. 5 helical membrane passes run 83–103, 105–125, 135–155, 159–179, and 186–206; these read LVAI…FLLA, LAAS…LVIG, LGIL…GSLL, LAVG…EDLF, and IGSG…AAAI.

This sequence belongs to the PRA1 family. In terms of assembly, interacts with PRA1B1, PRA1B2, PRA1B3, PRA1B4, PRA1B5 and PRA1E. As to expression, expressed in hypocotyls, roots, lateral roots, lateral root caps, columella cells, leaves and stomata.

It localises to the endoplasmic reticulum membrane. In terms of biological role, may be involved in both secretory and endocytic intracellular trafficking in the endosomal/prevacuolar compartments. The sequence is that of PRA1 family protein B6 (PRA1B6) from Arabidopsis thaliana (Mouse-ear cress).